Reading from the N-terminus, the 61-residue chain is Small ribosomal subunit protein uS14 (61 aa).

The Zn(2+) site is built by cysteine 24, cysteine 27, cysteine 40, and cysteine 43.

It belongs to the universal ribosomal protein uS14 family. Zinc-binding uS14 subfamily. Part of the 30S ribosomal subunit. Contacts proteins S3 and S10. Requires Zn(2+) as cofactor.

In terms of biological role, binds 16S rRNA, required for the assembly of 30S particles and may also be responsible for determining the conformation of the 16S rRNA at the A site. This Clostridium beijerinckii (strain ATCC 51743 / NCIMB 8052) (Clostridium acetobutylicum) protein is Small ribosomal subunit protein uS14.